The sequence spans 282 residues: HTH-type transcriptional activator RhaR (282 aa).

Residues 179 to 277 (DKLITRLAAS…GMTPSQWRHL (99 aa)) form the HTH araC/xylS-type domain. 2 consecutive DNA-binding regions (H-T-H motif) follow at residues 196-217 (DKFCDEASCSERVLRQQFRQQT) and 244-267 (ISDISTECGFEDSNYFSVVFTRET).

Binds DNA as a dimer.

Its subcellular location is the cytoplasm. Functionally, activates expression of the rhaSR operon in response to L-rhamnose. The protein is HTH-type transcriptional activator RhaR of Shigella flexneri serotype 5b (strain 8401).